The following is a 260-amino-acid chain: Pectate lyase H (260 aa).

Positions Met1 to Ala17 are cleaved as a signal peptide.

The protein belongs to the polysaccharide lyase 3 family. Requires Ca(2+) as cofactor.

The protein localises to the secreted. It catalyses the reaction Eliminative cleavage of (1-&gt;4)-alpha-D-galacturonan to give oligosaccharides with 4-deoxy-alpha-D-galact-4-enuronosyl groups at their non-reducing ends.. Its function is as follows. Pectinolytic enzyme consist of four classes of enzymes: pectin lyase, polygalacturonase, pectin methylesterase and rhamnogalacturonase. Among pectinolytic enzymes, pectin lyase is the most important in depolymerization of pectin, since it cleaves internal glycosidic bonds of highly methylated pectins. Favors pectate, the anion, over pectin, the methyl ester. This chain is Pectate lyase H (plyH), found in Emericella nidulans (strain FGSC A4 / ATCC 38163 / CBS 112.46 / NRRL 194 / M139) (Aspergillus nidulans).